The primary structure comprises 161 residues: Ubiquitin-conjugating enzyme E2Q-like protein 1 (161 aa).

A UBC core domain is found at 1–154 (MKELQDIARL…VKTHEKYGWV (154 aa)). The active-site Glycyl thioester intermediate is Cys88.

This sequence belongs to the ubiquitin-conjugating enzyme family. As to quaternary structure, interacts with FBXW7.

Its subcellular location is the nucleus. It catalyses the reaction S-ubiquitinyl-[E1 ubiquitin-activating enzyme]-L-cysteine + [E2 ubiquitin-conjugating enzyme]-L-cysteine = [E1 ubiquitin-activating enzyme]-L-cysteine + S-ubiquitinyl-[E2 ubiquitin-conjugating enzyme]-L-cysteine.. It participates in protein modification; protein ubiquitination. Probable E2 ubiquitin-protein ligase that catalyzes the covalent attachment of ubiquitin to target proteins. May facilitate the monoubiquitination and degradation of MTOR and CCNE1 through interaction with FBXW7. This chain is Ubiquitin-conjugating enzyme E2Q-like protein 1 (UBE2QL1), found in Homo sapiens (Human).